Reading from the N-terminus, the 474-residue chain is L-lactate permease (474 aa).

The next 11 membrane-spanning stretches (helical) occupy residues 4–21, 28–48, 63–85, 105–127, 142–164, 177–199, 209–231, 238–255, 281–303, 324–346, and 387–409; these read AILAIIPILWLILSLAVF, ACFIGLIITLLTSIIGFHFSI, FWPIIYIIVAAVFTYNLTTASGG, LILAWGFGGFLEAIAGFGTAVAI, AALICLIANTTPTAFGAIGLPVT, LSVIVSLQLFILIVAIPFVLVSL, GVFGITLASGLAFALPQILVSNY, SIIGSLFCILVTILFVNL, FILVFFFIMLTSSLFPAINQLLA, WLTSPGTMIILATFIAGLIQGMS, and IAVSLVAVTGGFYPFIAPVIGTL.

It belongs to the lactate permease family.

Its subcellular location is the cell membrane. Functionally, plays a role in L-lactate utilization. This chain is L-lactate permease (lctP), found in Streptococcus iniae (Streptococcus shiloi).